The primary structure comprises 324 residues: Acetyl-coenzyme A carboxylase carboxyl transferase subunit alpha (324 aa).

Positions 37-291 (KLERRLDKLK…RDFILREWLR (255 aa)) constitute a CoA carboxyltransferase C-terminal domain.

The protein belongs to the AccA family. As to quaternary structure, acetyl-CoA carboxylase is a heterohexamer composed of biotin carboxyl carrier protein (AccB), biotin carboxylase (AccC) and two subunits each of ACCase subunit alpha (AccA) and ACCase subunit beta (AccD).

It is found in the cytoplasm. The catalysed reaction is N(6)-carboxybiotinyl-L-lysyl-[protein] + acetyl-CoA = N(6)-biotinyl-L-lysyl-[protein] + malonyl-CoA. It participates in lipid metabolism; malonyl-CoA biosynthesis; malonyl-CoA from acetyl-CoA: step 1/1. Functionally, component of the acetyl coenzyme A carboxylase (ACC) complex. First, biotin carboxylase catalyzes the carboxylation of biotin on its carrier protein (BCCP) and then the CO(2) group is transferred by the carboxyltransferase to acetyl-CoA to form malonyl-CoA. The protein is Acetyl-coenzyme A carboxylase carboxyl transferase subunit alpha of Chlamydia abortus (strain DSM 27085 / S26/3) (Chlamydophila abortus).